The sequence spans 306 residues: Light-independent protochlorophyllide reductase iron-sulfur ATP-binding protein (306 aa).

Residues 1–31 (MREAAGLEARGLKSPPILKGQDGEGSLQVHQ) form a disordered region. ATP-binding positions include 50 to 55 (GIGKST) and lysine 79. Mg(2+) is bound at residue serine 54. [4Fe-4S] cluster-binding residues include cysteine 135 and cysteine 169. 220-221 (NR) lines the ATP pocket.

The protein belongs to the NifH/BchL/ChlL family. As to quaternary structure, homodimer. Protochlorophyllide reductase is composed of three subunits; BchL, BchN and BchB. Requires [4Fe-4S] cluster as cofactor.

It catalyses the reaction chlorophyllide a + oxidized 2[4Fe-4S]-[ferredoxin] + 2 ADP + 2 phosphate = protochlorophyllide a + reduced 2[4Fe-4S]-[ferredoxin] + 2 ATP + 2 H2O. Its pathway is porphyrin-containing compound metabolism; bacteriochlorophyll biosynthesis (light-independent). Component of the dark-operative protochlorophyllide reductase (DPOR) that uses Mg-ATP and reduced ferredoxin to reduce ring D of protochlorophyllide (Pchlide) to form chlorophyllide a (Chlide). This reaction is light-independent. The L component serves as a unique electron donor to the NB-component of the complex, and binds Mg-ATP. In Jannaschia sp. (strain CCS1), this protein is Light-independent protochlorophyllide reductase iron-sulfur ATP-binding protein.